The primary structure comprises 388 residues: Acetate kinase (388 aa).

Position 7 (Asn-7) interacts with Mg(2+). Lys-14 is an ATP binding site. Arg-76 is a binding site for substrate. Asp-133 acts as the Proton donor/acceptor in catalysis. Residues 193 to 197, 267 to 269, and 315 to 319 each bind ATP; these read HLGNG, DMR, and GIGEN. Glu-374 is a binding site for Mg(2+).

This sequence belongs to the acetokinase family. In terms of assembly, homodimer. It depends on Mg(2+) as a cofactor. Mn(2+) is required as a cofactor.

The protein resides in the cytoplasm. It catalyses the reaction acetate + ATP = acetyl phosphate + ADP. It participates in metabolic intermediate biosynthesis; acetyl-CoA biosynthesis; acetyl-CoA from acetate: step 1/2. Catalyzes the formation of acetyl phosphate from acetate and ATP. Can also catalyze the reverse reaction. The chain is Acetate kinase from Micrococcus luteus (strain ATCC 4698 / DSM 20030 / JCM 1464 / CCM 169 / CCUG 5858 / IAM 1056 / NBRC 3333 / NCIMB 9278 / NCTC 2665 / VKM Ac-2230) (Micrococcus lysodeikticus).